The following is a 317-amino-acid chain: N-acetyl-gamma-glutamyl-phosphate reductase (317 aa).

Cys-136 is an active-site residue.

Belongs to the NAGSA dehydrogenase family. Type 1 subfamily.

It is found in the cytoplasm. It catalyses the reaction N-acetyl-L-glutamate 5-semialdehyde + phosphate + NADP(+) = N-acetyl-L-glutamyl 5-phosphate + NADPH + H(+). Its pathway is amino-acid biosynthesis; L-arginine biosynthesis; N(2)-acetyl-L-ornithine from L-glutamate: step 3/4. Its function is as follows. Catalyzes the NADPH-dependent reduction of N-acetyl-5-glutamyl phosphate to yield N-acetyl-L-glutamate 5-semialdehyde. This chain is N-acetyl-gamma-glutamyl-phosphate reductase, found in Stenotrophomonas maltophilia (strain R551-3).